The primary structure comprises 488 residues: Pre-glycoprotein polyprotein GP complex (488 aa).

Gly-2 carries N-myristoyl glycine; by host lipidation. The Extracellular segment spans residues 2–17 (GQLFSFFEEVPNIIHE). A helical transmembrane segment spans residues 18 to 32 (AINIALIAVSLIAAL). Position 33 (Lys-33) is a topological domain, cytoplasmic. The helical transmembrane segment at 34-53 (GMINLWKSGLFQLIFFLTLA) threads the bilayer. Extracellular loops occupy residues 54-58 (GRSCS) and 59-427 (FRIG…TLVD). Residue Cys-57 coordinates Zn(2+). Asn-69, Asn-88, Asn-99, Asn-125, Asn-171, Asn-178, and Asn-222 each carry an N-linked (GlcNAc...) asparagine; by host glycan. Intrachain disulfides connect Cys-85/Cys-229, Cys-274/Cys-287, Cys-296/Cys-305, and Cys-359/Cys-380. 4 N-linked (GlcNAc...) asparagine; by host glycosylation sites follow: Asn-360, Asn-368, Asn-385, and Asn-390. A helical membrane pass occupies residues 428 to 448 (ICFWSTLFFTTTLFLHLVGFP). Topologically, residues 449 to 488 (THRHIRGEPCPLPHRLNSRGGCRCGKYPELKKPITWHKNH) are cytoplasmic. Zn(2+)-binding residues include His-450, His-452, Cys-458, His-462, Cys-470, Cys-472, and His-488.

The protein belongs to the arenaviridae GPC protein family. As to quaternary structure, homotetramer; disulfide-linked. Homotetramer. GP2 homotetramers bind through ionic interactions with GP1 homotetramers to form the GP complex together with the stable signal peptide. The GP-C polyprotein interacts with the host protease MBTPS1/SKI-1 resulting in the polyprotein processing. In terms of processing, specific enzymatic cleavages in vivo yield mature proteins. GP-C polyprotein is cleaved in the endoplasmic reticulum by the host protease MBTPS1. Only cleaved glycoprotein is incorporated into virions. Post-translationally, the SSP remains stably associated with the GP complex following cleavage by signal peptidase and plays crucial roles in the trafficking of GP through the secretory pathway. Myristoylation is necessary for GP2-mediated fusion activity.

It localises to the virion membrane. Its subcellular location is the host endoplasmic reticulum membrane. The protein resides in the host Golgi apparatus membrane. The protein localises to the host cell membrane. Functionally, interacts with the host receptor. Mediates virus attachment to host TFRC. This attachment induces virion internalization predominantly through clathrin-mediated endocytosis. Its function is as follows. Class I viral fusion protein that directs fusion of viral and host endosomal membranes, leading to delivery of the nucleocapsid into the cytoplasm. Membrane fusion is mediated by irreversible conformational changes induced upon acidification in the endosome. Stable signal peptide (SSP): cleaved and functions as a signal peptide. In addition, it is also retained as the third component of the GP complex. The SSP is required for efficient glycoprotein expression, post-translational maturation cleavage of GP1 and GP2, glycoprotein transport to the cell surface plasma membrane, formation of infectious virus particles, and acid pH-dependent glycoprotein-mediated cell fusion. The protein is Pre-glycoprotein polyprotein GP complex of Homo sapiens (Human).